The primary structure comprises 211 residues: Pupal cuticle protein G1A (211 aa).

5 tandem repeats follow at residues 13–16 (AAPA), 21–24 (AAPA), 33–36 (AAPV), 111–114 (AAPV), and 179–182 (AAPV).

Component of the cuticle of the pupa of Tenebrio molitor. This chain is Pupal cuticle protein G1A, found in Tenebrio molitor (Yellow mealworm beetle).